The following is a 297-amino-acid chain: Protein muscleblind (297 aa).

2 consecutive C3H1-type zinc fingers follow at residues W18–A46 and N52–Q80.

The protein belongs to the muscleblind family. In terms of tissue distribution, expressed in embryonic muscle cells.

It localises to the nucleus. Its function is as follows. Required for terminal differentiation of photoreceptor cells. Vital for embryonic development. This chain is Protein muscleblind (mbl), found in Drosophila melanogaster (Fruit fly).